The following is a 61-amino-acid chain: Small ribosomal subunit protein uS14 (61 aa).

Residues C24, C27, C40, and C43 each contribute to the Zn(2+) site.

It belongs to the universal ribosomal protein uS14 family. Zinc-binding uS14 subfamily. Part of the 30S ribosomal subunit. Contacts proteins S3 and S10. Zn(2+) is required as a cofactor.

Functionally, binds 16S rRNA, required for the assembly of 30S particles and may also be responsible for determining the conformation of the 16S rRNA at the A site. The polypeptide is Small ribosomal subunit protein uS14 (Fervidobacterium nodosum (strain ATCC 35602 / DSM 5306 / Rt17-B1)).